We begin with the raw amino-acid sequence, 559 residues long: YTH domain-containing family protein 1 (559 aa).

The interval 1-49 is disordered; the sequence is MSATSVDPQRTKGQDNKVQNGSLHQKDAVHDNDFEPYLSGQSNPSNSYP. N-acetylserine is present on Ser-2. Residues 24-33 are compositionally biased toward basic and acidic residues; that stretch reads HQKDAVHDND. Ser-182 bears the Phosphoserine mark. The segment at 239-365 is disordered; it reads SKPAKPQPKM…PTSAPSVESH (127 aa). 2 stretches are compositionally biased toward low complexity: residues 279 to 305 and 314 to 326; these read PAPKASAPQQTPSPQAAPQPQQVAQPL and QPQYQSPQQPLQP. A compositionally biased stretch (polar residues) spans 343-361; that stretch reads GANSDSNSVGNAQPTSAPS. The YTH domain occupies 389-523; sequence GRVFIIKSYS…EKAKQVLKII (135 aa). Residues 395–397, Asp-401, 411–412, Asn-441, Trp-465, and Trp-470 contribute to the RNA site; these read KSY and WC.

Belongs to the YTHDF family. YTHDF1 subfamily. As to quaternary structure, interacts with CNOT1; promoting recruitment of the CCR4-NOT complex. Interacts with ribosomes. Interacts with eIF3 (EIF3A or EIF3B). Interacts with YTHDF3. Ubiquitinated by the CUL7-FBXW8 E3 ligase complex leading to degradation. Deubiquitinated and stabilized by USP5 by removing 'Lys-11'-linked polyubiquitination. In terms of tissue distribution, in brain, preferentially expressed in the hippocampus.

It is found in the cytoplasm. The protein resides in the P-body. The protein localises to the stress granule. Its function is as follows. Specifically recognizes and binds N6-methyladenosine (m6A)-containing mRNAs, and regulates their stability. M6A is a modification present at internal sites of mRNAs and some non-coding RNAs and plays a role in mRNA stability and processing. Acts as a regulator of mRNA stability by promoting degradation of m6A-containing mRNAs via interaction with the CCR4-NOT complex. The YTHDF paralogs (YTHDF1, YTHDF2 and YTHDF3) share m6A-containing mRNAs targets and act redundantly to mediate mRNA degradation and cellular differentiation. Required to facilitate learning and memory formation in the hippocampus by binding to m6A-containing neuronal mRNAs. Acts as a regulator of axon guidance by binding to m6A-containing ROBO3 transcripts. Acts as a negative regulator of antigen cross-presentation in myeloid dendritic cells. In the context of tumorigenesis, negative regulation of antigen cross-presentation limits the anti-tumor response by reducing efficiency of tumor-antigen cross-presentation. Promotes formation of phase-separated membraneless compartments, such as P-bodies or stress granules, by undergoing liquid-liquid phase separation upon binding to mRNAs containing multiple m6A-modified residues: polymethylated mRNAs act as a multivalent scaffold for the binding of YTHDF proteins, juxtaposing their disordered regions and thereby leading to phase separation. The resulting mRNA-YTHDF complexes then partition into different endogenous phase-separated membraneless compartments, such as P-bodies, stress granules or neuronal RNA granules. This Mus musculus (Mouse) protein is YTH domain-containing family protein 1.